The primary structure comprises 244 residues: 1-(5-phosphoribosyl)-5-[(5-phosphoribosylamino)methylideneamino] imidazole-4-carboxamide isomerase (244 aa).

Catalysis depends on D10, which acts as the Proton acceptor. Catalysis depends on D129, which acts as the Proton donor.

It belongs to the HisA/HisF family.

The protein resides in the cytoplasm. It catalyses the reaction 1-(5-phospho-beta-D-ribosyl)-5-[(5-phospho-beta-D-ribosylamino)methylideneamino]imidazole-4-carboxamide = 5-[(5-phospho-1-deoxy-D-ribulos-1-ylimino)methylamino]-1-(5-phospho-beta-D-ribosyl)imidazole-4-carboxamide. It participates in amino-acid biosynthesis; L-histidine biosynthesis; L-histidine from 5-phospho-alpha-D-ribose 1-diphosphate: step 4/9. The polypeptide is 1-(5-phosphoribosyl)-5-[(5-phosphoribosylamino)methylideneamino] imidazole-4-carboxamide isomerase (Rhodococcus jostii (strain RHA1)).